Consider the following 414-residue polypeptide: Chromobox protein homolog 6 (414 aa).

The region spanning 11–69 (FAAESIIKRRIRKGRIEYLVKWKGWAIKYSTWEPEENILDSRLIAAFEQKERERELYGP) is the Chromo domain. Ser-107 is subject to Phosphoserine. 3 disordered regions span residues 127–152 (HRMS…PISP), 267–308 (APFD…VPNW), and 344–365 (ALEP…PEMS). Residues 267–287 (APFDAHSSSSSGCPSPTLQSS) are compositionally biased toward low complexity.

As to quaternary structure, component of a PRC1-like complex. Distinct PRC1-like core complexes are composed of a RING1 subunit (RING1B or RING1A), one of the six PCGF proteins (PCGF1-6), one PHC protein (PHC1-3) and one of the CBX proteins (CBX2, CBX4, CBX6, CBX7 or CBX8). Interacts with PCGF1, PCGF2, PCGF3, BMI1, PCGF5, PCGF6, RING1 and RNF2. May interact with H3C15 and H3C1. Interacts (via chromodomain) with single-stranded RNA (ssRNA). In terms of processing, ubiquitinated. Ubiquitination regulates the function of the Polycomb group (PcG) multiprotein PRC1-like complex. Deubiquitinated by USP26. Expressed in mouse embryonic stem cells.

The protein resides in the nucleus. It localises to the chromosome. Component of a Polycomb group (PcG) multiprotein PRC1-like complex, a complex class required to maintain the transcriptionally repressive state of many genes, including Hox genes, throughout development. PcG PRC1 complex acts via chromatin remodeling and modification of histones; it mediates monoubiquitination of histone H2A 'Lys-119', rendering chromatin heritably changed in its expressibility. Possibly contributes to the target selectivity of the PRC1 complex by binding specific regions of chromatin. Recruitment to chromatin might occur in an H3K27me3-independent fashion. May have a PRC1-independent function in embryonic stem cells. The sequence is that of Chromobox protein homolog 6 (Cbx6) from Mus musculus (Mouse).